The chain runs to 502 residues: MSIKPEEISSLIKQQIENFQSDVQVQDVGTVIRVGDGIALAHGLESVMAGELLEFSNGVMGMAQNLEENNVGIIILGPYSEIREGDEVKRTGRIMEVPVGEELLGRVVNPLGQPIDGRGPIETSKTRPIESPAPGVMDRKSVHEPLQTGIKSIDSMIPVGRGQRELIIGDRQTGKTSIAIDTIINQKDQDMICIYVAIGQKESTVAGVVETLRQHGALDYTIVVSASASEPAPLLFLAPYAGVSMGEEFMYNGKHVLVVYDDLTKQAAAYRELSLLLRRPPGREAYPGDVFYLHSRLLERAAKLSDAKGGGSITALPFIETQAGDVSAYIPTNVISITDGQIFLQSDLFYSGVRPAVNAGLSVSRVGGSAQIKAMKKVSGTLRLDLAAYRELEAFAQFGSDLDKATQAKLNRGQRTVEVLKQGLHEPLPVEKQVAIIYALINGFLDDIPVGDVRRFESELFTFLDHNKKELLDHIRTTGNLPDDSEFKAAITEFKQGFVTTK.

The segment at 114–139 is disordered; the sequence is PIDGRGPIETSKTRPIESPAPGVMDR. 169 to 176 serves as a coordination point for ATP; sequence GDRQTGKT.

The protein belongs to the ATPase alpha/beta chains family. As to quaternary structure, F-type ATPases have 2 components, CF(1) - the catalytic core - and CF(0) - the membrane proton channel. CF(1) has five subunits: alpha(3), beta(3), gamma(1), delta(1), epsilon(1). CF(0) has three main subunits: a(1), b(2) and c(9-12). The alpha and beta chains form an alternating ring which encloses part of the gamma chain. CF(1) is attached to CF(0) by a central stalk formed by the gamma and epsilon chains, while a peripheral stalk is formed by the delta and b chains.

The protein resides in the cell membrane. The enzyme catalyses ATP + H2O + 4 H(+)(in) = ADP + phosphate + 5 H(+)(out). Produces ATP from ADP in the presence of a proton gradient across the membrane. The alpha chain is a regulatory subunit. The chain is ATP synthase subunit alpha from Halalkalibacterium halodurans (strain ATCC BAA-125 / DSM 18197 / FERM 7344 / JCM 9153 / C-125) (Bacillus halodurans).